Consider the following 454-residue polypeptide: Chromosomal replication initiator protein DnaA (454 aa).

The tract at residues 1–76 (MNKLKTDLNL…IGASFRILAK (76 aa)) is domain I, interacts with DnaA modulators. The interval 76–113 (KNPKIIFAQESPGNGEKATGKKIKSLPREDKSSIFESK) is domain II. The tract at residues 114-330 (GLNTKFSFEN…GALNRLCAYA (217 aa)) is domain III, AAA+ region. Residues Gly-158, Gly-160, Lys-161, and Thr-162 each coordinate ATP. Positions 331-454 (SIHKEGKITL…KITEQLTSSQ (124 aa)) are domain IV, binds dsDNA.

The protein belongs to the DnaA family. As to quaternary structure, oligomerizes as a right-handed, spiral filament on DNA at oriC.

The protein resides in the cytoplasm. Functionally, plays an essential role in the initiation and regulation of chromosomal replication. ATP-DnaA binds to the origin of replication (oriC) to initiate formation of the DNA replication initiation complex once per cell cycle. Binds the DnaA box (a 9 base pair repeat at the origin) and separates the double-stranded (ds)DNA. Forms a right-handed helical filament on oriC DNA; dsDNA binds to the exterior of the filament while single-stranded (ss)DNA is stabiized in the filament's interior. The ATP-DnaA-oriC complex binds and stabilizes one strand of the AT-rich DNA unwinding element (DUE), permitting loading of DNA polymerase. After initiation quickly degrades to an ADP-DnaA complex that is not apt for DNA replication. Binds acidic phospholipids. In Methylacidiphilum infernorum (isolate V4) (Methylokorus infernorum (strain V4)), this protein is Chromosomal replication initiator protein DnaA.